The chain runs to 174 residues: ATP-dependent protease subunit HslV (174 aa).

The active site involves Thr2. 3 residues coordinate Na(+): Gly159, Asp162, and Thr165.

The protein belongs to the peptidase T1B family. HslV subfamily. A double ring-shaped homohexamer of HslV is capped on each side by a ring-shaped HslU homohexamer. The assembly of the HslU/HslV complex is dependent on binding of ATP.

It is found in the cytoplasm. The enzyme catalyses ATP-dependent cleavage of peptide bonds with broad specificity.. Allosterically activated by HslU binding. In terms of biological role, protease subunit of a proteasome-like degradation complex believed to be a general protein degrading machinery. This Lacticaseibacillus casei (strain BL23) (Lactobacillus casei) protein is ATP-dependent protease subunit HslV.